The following is a 235-amino-acid chain: Centromere protein H (235 aa).

The disordered stretch occupies residues 1-23; that stretch reads MAGRLSESVGSGPGAEAETAADP. The stretch at 125–145 forms a coiled coil; that stretch reads EIIQAHQQARVIRENLNDIRR.

It belongs to the CENP-H/MCM16 family. As to quaternary structure, component of the CENPA-HI complex, at least composed of CENPH, CENPI, CENPK, CENPL, CENPM, CENPO and CENPP. Interacts with NDC80.

Its subcellular location is the nucleus. The protein localises to the chromosome. The protein resides in the centromere. It localises to the kinetochore. Its function is as follows. Component of the CENPA-HI complex, a centromeric complex involved in assembly of kinetochore proteins, mitotic progression and chromosome segregation. Required for the localization of CENPC but not CENPA to the centromere. It however may be involved in incorporation of newly synthesized CENPA into centromeres via its interaction with the CENPA-NAC complex. The protein is Centromere protein H (CENPH) of Gallus gallus (Chicken).